The following is a 419-amino-acid chain: Tyrosine--tRNA ligase (419 aa).

Tyr34 is a binding site for L-tyrosine. A 'HIGH' region motif is present at residues 39-48 (PSGDSMHIGH). L-tyrosine is bound by residues Tyr168 and Gln172. Residues 230 to 234 (KFGKS) carry the 'KMSKS' region motif. Position 233 (Lys233) interacts with ATP. Residues 352–418 (VNLVDWLVTL…GKKKYFLVSY (67 aa)) form the S4 RNA-binding domain.

It belongs to the class-I aminoacyl-tRNA synthetase family. TyrS type 1 subfamily. As to quaternary structure, homodimer.

The protein resides in the cytoplasm. It catalyses the reaction tRNA(Tyr) + L-tyrosine + ATP = L-tyrosyl-tRNA(Tyr) + AMP + diphosphate + H(+). Catalyzes the attachment of tyrosine to tRNA(Tyr) in a two-step reaction: tyrosine is first activated by ATP to form Tyr-AMP and then transferred to the acceptor end of tRNA(Tyr). The chain is Tyrosine--tRNA ligase from Listeria innocua serovar 6a (strain ATCC BAA-680 / CLIP 11262).